Reading from the N-terminus, the 230-residue chain is uncharacterized protein (230 aa).

Positions 1-22 (MNIRSFLLISIFTAISYLVVDG) are cleaved as a signal peptide. The Lumenal segment spans residues 23–167 (ATPRTFAPSA…YTPYGGVKAL (145 aa)). Residues 55–90 (SSSSSSSSISTSHDSQPSTSSSSPSSTSTSSSSGTS) are disordered. The chain crosses the membrane as a helical span at residues 168 to 188 (IGILVGVVVGSVFLLAIVMVI). The Cytoplasmic segment spans residues 189–230 (ARIWGPRLLANKDQNNNNEDLDSNLVSKDSEGTPQITYASNF). The interval 208 to 230 (DLDSNLVSKDSEGTPQITYASNF) is disordered.

The protein resides in the endoplasmic reticulum membrane. This is an uncharacterized protein from Schizosaccharomyces pombe (strain 972 / ATCC 24843) (Fission yeast).